A 150-amino-acid polypeptide reads, in one-letter code: Arginine repressor (150 aa).

This sequence belongs to the ArgR family.

The protein resides in the cytoplasm. It participates in amino-acid biosynthesis; L-arginine biosynthesis [regulation]. Regulates arginine biosynthesis genes. This is Arginine repressor from Ruminiclostridium cellulolyticum (strain ATCC 35319 / DSM 5812 / JCM 6584 / H10) (Clostridium cellulolyticum).